A 91-amino-acid chain; its full sequence is MGRSLKKGPFIADSLLRKVEKQNAADDKSVIKTWSRASTILPMMIGHTIAVHNGRTHVPVFVTEQMVGHKLGEFAPTRTFKGHIKDKKGGR.

This sequence belongs to the universal ribosomal protein uS19 family.

Protein S19 forms a complex with S13 that binds strongly to the 16S ribosomal RNA. This Synechococcus sp. (strain CC9311) protein is Small ribosomal subunit protein uS19.